Here is a 371-residue protein sequence, read N- to C-terminus: Cyanide hydratase (371 aa).

In terms of domain architecture, CN hydrolase spans 6-285 (YKAAAVTSEP…DGLLYVDIDL (280 aa)). Glu-46 functions as the Proton acceptor in the catalytic mechanism. Lys-128 is an active-site residue. The active-site Nucleophile is Cys-163. The span at 339 to 353 (GLNRPLDPPKDERHG) shows a compositional bias: basic and acidic residues. The segment at 339–371 (GLNRPLDPPKDERHGIVGVAGQKSAEQRKAGDL) is disordered.

It belongs to the carbon-nitrogen hydrolase superfamily. Nitrilase family. As to quaternary structure, oligomer of dimers, forming left-handed helical fibers.

It catalyses the reaction formamide = hydrogen cyanide + H2O. In terms of biological role, catalyzes the hydration of cyanide to formamide. Degradation of cyanide may be important for plant pathogenic fungi in infection of cyanogenic plants. Also acts on 2-cyanopyridine, fumaronitrile and benzonitrile, albeit at a lower rate. The protein is Cyanide hydratase (nit) of Stereum hirsutum (strain FP-91666) (White-rot fungus).